A 382-amino-acid polypeptide reads, in one-letter code: Mannitol-1-phosphate 5-dehydrogenase (382 aa).

3–14 (ALHFGAGNIGRG) provides a ligand contact to NAD(+).

This sequence belongs to the mannitol dehydrogenase family.

The enzyme catalyses D-mannitol 1-phosphate + NAD(+) = beta-D-fructose 6-phosphate + NADH + H(+). The polypeptide is Mannitol-1-phosphate 5-dehydrogenase (Salmonella schwarzengrund (strain CVM19633)).